Consider the following 491-residue polypeptide: Angiopoietin-related protein 1 (491 aa).

The first 23 residues, 1–23 (MKAFIWTLSVLFFLLMGIGHGRG), serve as a signal peptide directing secretion. The stretch at 80-168 (ITRMDLENLK…LNVTTEMLKM (89 aa)) forms a coiled coil. N-linked (GlcNAc...) asparagine glycosylation is found at N160 and N188. One can recognise a Fibrinogen C-terminal domain in the interval 271–491 (FINEGPYKDC…AVQMLIKPID (221 aa)). 2 disulfide bridges follow: C280–C309 and C432–C445.

It is found in the secreted. The chain is Angiopoietin-related protein 1 (ANGPTL1) from Bos taurus (Bovine).